A 160-amino-acid polypeptide reads, in one-letter code: SsrA-binding protein (160 aa).

It belongs to the SmpB family.

Its subcellular location is the cytoplasm. Required for rescue of stalled ribosomes mediated by trans-translation. Binds to transfer-messenger RNA (tmRNA), required for stable association of tmRNA with ribosomes. tmRNA and SmpB together mimic tRNA shape, replacing the anticodon stem-loop with SmpB. tmRNA is encoded by the ssrA gene; the 2 termini fold to resemble tRNA(Ala) and it encodes a 'tag peptide', a short internal open reading frame. During trans-translation Ala-aminoacylated tmRNA acts like a tRNA, entering the A-site of stalled ribosomes, displacing the stalled mRNA. The ribosome then switches to translate the ORF on the tmRNA; the nascent peptide is terminated with the 'tag peptide' encoded by the tmRNA and targeted for degradation. The ribosome is freed to recommence translation, which seems to be the essential function of trans-translation. The protein is SsrA-binding protein of Nocardia farcinica (strain IFM 10152).